A 2476-amino-acid polypeptide reads, in one-letter code: Non-reducing polyketide synthase ausA (2476 aa).

The segment at 14 to 253 is N-terminal acylcarrier protein transacylase domain (SAT); that stretch reads VLFGPKYPEV…HHSNHTQAVE (240 aa). In terms of domain architecture, Ketosynthase family 3 (KS3) spans 379–795; sequence AVPIAVTGMA…GSNAAIVLRE (417 aa). Active-site for beta-ketoacyl synthase activity residues include cysteine 544, histidine 679, and histidine 718. The interval 906–1210 is malonyl-CoA:ACP transacylase (MAT) domain; sequence ICFGGQTGDT…LPTDLSGAQA (305 aa). Serine 993 functions as the For acyl/malonyl transferase activity in the catalytic mechanism. The tract at residues 1277 to 1405 is N-terminal hotdog fold; the sequence is QEASLVRLLR…GRVSLQAAGS (129 aa). A PKS/mFAS DH domain is found at 1277 to 1584; the sequence is QEASLVRLLR…FTGVSIQSLK (308 aa). Positions 1280-1583 are product template (PT) domain; the sequence is SLVRLLRQDG…TFTGVSIQSL (304 aa). The Proton acceptor; for dehydratase activity role is filled by histidine 1310. Residues 1433 to 1584 form a C-terminal hotdog fold region; sequence SSSGLKRSTV…FTGVSIQSLK (152 aa). The active-site Proton donor; for dehydratase activity is the aspartate 1491. The Carrier domain maps to 1626 to 1700; it reads DGDLLAVQTM…GLVQRIFPGH (75 aa). Serine 1660 carries the post-translational modification O-(pantetheine 4'-phosphoryl)serine. Residues 1862-2095 are methyltransferase (CMeT) domain; it reads QHASEHKLLH…GFNWVDWTDN (234 aa). The segment at 2128–2476 is thioesterase (TE) domain; it reads NTVQEQTVLY…YEFLRRHVGL (349 aa). Active-site for thioesterase activity residues include serine 2251, aspartate 2413, and histidine 2445.

The enzyme catalyses 3 malonyl-CoA + acetyl-CoA + 2 S-adenosyl-L-methionine = 3,5-dimethylorsellinate + 2 S-adenosyl-L-homocysteine + 3 CO2 + 4 CoA. Its pathway is secondary metabolite biosynthesis; terpenoid biosynthesis. Functionally, non-reducing polyketide synthase; part of the gene cluster A that mediates the biosynthesis of austinol and dehydroaustinol, two fungal meroterpenoids. The first step of the pathway is the synthesis of 3,5-dimethylorsellinic acid by the polyketide synthase ausA. 3,5-dimethylorsellinic acid is then prenylated by the polyprenyl transferase ausN. Further epoxidation by the FAD-dependent monooxygenase ausM and cyclization by the probable terpene cyclase ausL lead to the formation of protoaustinoid A. Protoaustinoid A is then oxidized to spiro-lactone preaustinoid A3 by the combined action of the FAD-binding monooxygenases ausB and ausC, and the dioxygenase ausE. Acid-catalyzed keto-rearrangement and ring contraction of the tetraketide portion of preaustinoid A3 by ausJ lead to the formation of preaustinoid A4. The aldo-keto reductase ausK, with the help of ausH, is involved in the next step by transforming preaustinoid A4 into isoaustinone which is in turn hydroxylated by the P450 monooxygenase ausI to form austinolide. Finally, the cytochrome P450 monooxygenase ausG modifies austinolide to austinol. Austinol can be further modified to dehydroaustinol which forms a diffusible complex with diorcinol that initiates conidiation. Due to genetic rearrangements of the clusters and the subsequent loss of some enzymes, the end products of the Emericella nidulans austinoid biosynthesis clusters are austinol and dehydroaustinol, even if additional enzymes, such as the O-acetyltransferase ausQ and the cytochrome P450 monooxygenase ausR are still functional. This is Non-reducing polyketide synthase ausA from Emericella nidulans (strain FGSC A4 / ATCC 38163 / CBS 112.46 / NRRL 194 / M139) (Aspergillus nidulans).